Reading from the N-terminus, the 131-residue chain is Small ribosomal subunit protein uS8 (131 aa).

Belongs to the universal ribosomal protein uS8 family. As to quaternary structure, part of the 30S ribosomal subunit. Contacts proteins S5 and S12.

Functionally, one of the primary rRNA binding proteins, it binds directly to 16S rRNA central domain where it helps coordinate assembly of the platform of the 30S subunit. The sequence is that of Small ribosomal subunit protein uS8 from Helicobacter pylori (strain P12).